The sequence spans 162 residues: Phosphopantetheine adenylyltransferase (162 aa).

Threonine 14 lines the substrate pocket. ATP contacts are provided by residues 14–15 (TF) and histidine 22. Residues lysine 46, leucine 78, and arginine 92 each coordinate substrate. ATP contacts are provided by residues 93-95 (GLR), glutamate 103, and 128-134 (HSFISSS).

This sequence belongs to the bacterial CoaD family. Homohexamer. Requires Mg(2+) as cofactor.

Its subcellular location is the cytoplasm. The enzyme catalyses (R)-4'-phosphopantetheine + ATP + H(+) = 3'-dephospho-CoA + diphosphate. Its pathway is cofactor biosynthesis; coenzyme A biosynthesis; CoA from (R)-pantothenate: step 4/5. Functionally, reversibly transfers an adenylyl group from ATP to 4'-phosphopantetheine, yielding dephospho-CoA (dPCoA) and pyrophosphate. The chain is Phosphopantetheine adenylyltransferase from Xylella fastidiosa (strain 9a5c).